Here is a 421-residue protein sequence, read N- to C-terminus: Tyrosine--tRNA ligase (421 aa).

Tyr-35 provides a ligand contact to L-tyrosine. The 'HIGH' region signature appears at 40 to 49 (PTADSLHIGH). L-tyrosine is bound by residues Tyr-170 and Gln-174. The short motif at 232 to 236 (KFGKT) is the 'KMSKS' region element. Lys-235 provides a ligand contact to ATP. In terms of domain architecture, S4 RNA-binding spans 355–421 (LSLVDVLVES…GKKKYFLITY (67 aa)).

It belongs to the class-I aminoacyl-tRNA synthetase family. TyrS type 1 subfamily. As to quaternary structure, homodimer.

It is found in the cytoplasm. The enzyme catalyses tRNA(Tyr) + L-tyrosine + ATP = L-tyrosyl-tRNA(Tyr) + AMP + diphosphate + H(+). Functionally, catalyzes the attachment of tyrosine to tRNA(Tyr) in a two-step reaction: tyrosine is first activated by ATP to form Tyr-AMP and then transferred to the acceptor end of tRNA(Tyr). The protein is Tyrosine--tRNA ligase of Bacillus velezensis (strain DSM 23117 / BGSC 10A6 / LMG 26770 / FZB42) (Bacillus amyloliquefaciens subsp. plantarum).